A 386-amino-acid polypeptide reads, in one-letter code: Bifunctional enzyme IspD/IspF (386 aa).

A 2-C-methyl-D-erythritol 4-phosphate cytidylyltransferase region spans residues 1 to 225 (MYNFVTLSIL…SCLSAPSSDT (225 aa)). The interval 226–386 (LSGVGFDVHA…NLKYFDWTKI (161 aa)) is 2-C-methyl-D-erythritol 2,4-cyclodiphosphate synthase. A divalent metal cation-binding residues include aspartate 232 and histidine 234. Residues 232–234 (DVH) and 258–259 (HS) contribute to the 4-CDP-2-C-methyl-D-erythritol 2-phosphate site. Residue histidine 266 participates in a divalent metal cation binding. Residues 280-282 (DIG), 285-289 (FPDND), 356-359 (TTTE), phenylalanine 363, and arginine 366 contribute to the 4-CDP-2-C-methyl-D-erythritol 2-phosphate site.

It in the N-terminal section; belongs to the IspD/TarI cytidylyltransferase family. IspD subfamily. The protein in the C-terminal section; belongs to the IspF family. A divalent metal cation serves as cofactor.

It carries out the reaction 2-C-methyl-D-erythritol 4-phosphate + CTP + H(+) = 4-CDP-2-C-methyl-D-erythritol + diphosphate. The catalysed reaction is 4-CDP-2-C-methyl-D-erythritol 2-phosphate = 2-C-methyl-D-erythritol 2,4-cyclic diphosphate + CMP. It functions in the pathway isoprenoid biosynthesis; isopentenyl diphosphate biosynthesis via DXP pathway; isopentenyl diphosphate from 1-deoxy-D-xylulose 5-phosphate: step 2/6. Its pathway is isoprenoid biosynthesis; isopentenyl diphosphate biosynthesis via DXP pathway; isopentenyl diphosphate from 1-deoxy-D-xylulose 5-phosphate: step 4/6. Bifunctional enzyme that catalyzes the formation of 4-diphosphocytidyl-2-C-methyl-D-erythritol from CTP and 2-C-methyl-D-erythritol 4-phosphate (MEP) (IspD), and catalyzes the conversion of 4-diphosphocytidyl-2-C-methyl-D-erythritol 2-phosphate (CDP-ME2P) to 2-C-methyl-D-erythritol 2,4-cyclodiphosphate (ME-CPP) with a corresponding release of cytidine 5-monophosphate (CMP) (IspF). This is Bifunctional enzyme IspD/IspF from Sulfurimonas denitrificans (strain ATCC 33889 / DSM 1251) (Thiomicrospira denitrificans (strain ATCC 33889 / DSM 1251)).